Reading from the N-terminus, the 289-residue chain is Pantothenate synthetase (289 aa).

30–37 (MGYLHKGH) is a binding site for ATP. Catalysis depends on His37, which acts as the Proton donor. Gln61 is a (R)-pantoate binding site. Gln61 is a beta-alanine binding site. 147–150 (GEKD) is an ATP binding site. Gln153 is a (R)-pantoate binding site. ATP-binding positions include Val176 and 184–187 (CSSR).

It belongs to the pantothenate synthetase family. Homodimer.

The protein localises to the cytoplasm. It catalyses the reaction (R)-pantoate + beta-alanine + ATP = (R)-pantothenate + AMP + diphosphate + H(+). It participates in cofactor biosynthesis; (R)-pantothenate biosynthesis; (R)-pantothenate from (R)-pantoate and beta-alanine: step 1/1. In terms of biological role, catalyzes the condensation of pantoate with beta-alanine in an ATP-dependent reaction via a pantoyl-adenylate intermediate. The protein is Pantothenate synthetase of Allorhizobium ampelinum (strain ATCC BAA-846 / DSM 112012 / S4) (Agrobacterium vitis (strain S4)).